Reading from the N-terminus, the 477-residue chain is (R)-2-hydroxyglutaryl-CoA dehydratase, subunit alpha (477 aa).

This sequence belongs to the FldB/FldC dehydratase alpha/beta subunit family. As to quaternary structure, the (R)-2-hydroxyglutaryl-CoA dehydratase enzyme system is a heterodimer composed of an alpha subunit (HgdA) and a beta subunit (HgdB). The cofactor is [4Fe-4S] cluster. FMN serves as cofactor. Mg(2+) is required as a cofactor.

The protein resides in the cytoplasm. The enzyme catalyses (R)-2-hydroxyglutaryl-CoA = (2E)-glutaconyl-CoA + H2O. The protein operates within amino-acid degradation; L-glutamate degradation via hydroxyglutarate pathway; crotonoyl-CoA from L-glutamate: step 4/5. With respect to regulation, activated by the HgdC. Reversibly inactivated by oxidants such as 2-nitrophenol, 3-nitrophenol, 4-nitrophenol, 4-nitrobenzoate, carbonyl cyanide 4-(trifluoromethoxy)phenylhydrazone (FCCP) and chloramphenicol. Irreversibly inactivated by oxidants such as hydroxylamine and nitrite. Involved in the fermentation of L-glutamate via the hydroxyglutarate pathway. Catalyzes the reversible syn-elimination of water from (R)-2-hydroxyglutaryl-CoA to yield (E)-glutaconyl-CoA. The dehydration mechanism involves a transient one electron reduction of the thioester from (R)-2-hydroxyglutaryl-CoA, generating a ketyl radical. Prior to (E)-glutaconyl-CoA formation, the ketyl radical is subsequently reoxidized by electron transfer back to the HgdA-HgdB complex (CompD) to avoid change in oxidation state of the substrate. The appropriate redox state of dehydratase HgdA-HgdB complex (CompD) is maintained by HgdC (CompA) via hydrolysis of ATP and ATP-dependent electron transfer. Since the electron is recycled, the dehydratase is able to perform several turnovers with only catalytic amounts of ATP and substoichiometric amounts of HgdC (CompA). The sequence is that of (R)-2-hydroxyglutaryl-CoA dehydratase, subunit alpha from Acidaminococcus fermentans (strain ATCC 25085 / DSM 20731 / CCUG 9996 / CIP 106432 / VR4).